We begin with the raw amino-acid sequence, 129 residues long: D-ribose pyranase 1 (129 aa).

The active-site Proton donor is the His20. Substrate is bound by residues Asp28, His96, and 118-120 (YSN).

This sequence belongs to the RbsD / FucU family. RbsD subfamily. In terms of assembly, homodecamer.

It localises to the cytoplasm. It carries out the reaction beta-D-ribopyranose = beta-D-ribofuranose. The protein operates within carbohydrate metabolism; D-ribose degradation; D-ribose 5-phosphate from beta-D-ribopyranose: step 1/2. Catalyzes the interconversion of beta-pyran and beta-furan forms of D-ribose. In Rubrobacter xylanophilus (strain DSM 9941 / JCM 11954 / NBRC 16129 / PRD-1), this protein is D-ribose pyranase 1.